A 91-amino-acid polypeptide reads, in one-letter code: Large ribosomal subunit protein bL27 (91 aa).

Belongs to the bacterial ribosomal protein bL27 family. Part of the 50S ribosomal subunit. Contacts protein L18.

Functionally, binds the 5S and 23S rRNAs and also the tRNA in the P site. The chain is Large ribosomal subunit protein bL27 (rpmA) from Deinococcus radiodurans (strain ATCC 13939 / DSM 20539 / JCM 16871 / CCUG 27074 / LMG 4051 / NBRC 15346 / NCIMB 9279 / VKM B-1422 / R1).